A 173-amino-acid chain; its full sequence is Glycine cleavage system H protein, mitochondrial (173 aa).

The N-terminal 48 residues, 1 to 48 (MALRVVRSVRALLCTLRAVPSPAAPCPPRPWQLGVGAVRTLRTGPALL), are a transit peptide targeting the mitochondrion. The region spanning 66–148 (IGTVGISNFA…YEDGWLIKMT (83 aa)) is the Lipoyl-binding domain. The residue at position 107 (Lys107) is an N6-lipoyllysine.

It belongs to the GcvH family. In terms of assembly, interacts with GLDC. The glycine cleavage system is composed of four proteins: P (GLDC), T (GCST), L (DLD) and H (GCSH). (R)-lipoate is required as a cofactor.

It is found in the mitochondrion. Functionally, the glycine cleavage system catalyzes the degradation of glycine. The H protein (GCSH) shuttles the methylamine group of glycine from the P protein (GLDC) to the T protein (GCST). Has a pivotal role in the lipoylation of enzymes involved in cellular energetics such as the mitochondrial dihydrolipoyllysine-residue acetyltransferase component of pyruvate dehydrogenase complex (DLAT), and the mitochondrial dihydrolipoyllysine-residue succinyltransferase component of 2-oxoglutarate dehydrogenase complex (DLST). This is Glycine cleavage system H protein, mitochondrial from Homo sapiens (Human).